The primary structure comprises 318 residues: Ribose-phosphate pyrophosphokinase (318 aa).

Residues 40–42 (DGE) and 99–100 (RQ) each bind ATP. Mg(2+)-binding residues include H134 and D173. K196 is an active-site residue. D-ribose 5-phosphate is bound by residues R198, D222, and 226–230 (DTAGT).

It belongs to the ribose-phosphate pyrophosphokinase family. Class I subfamily. Homohexamer. The cofactor is Mg(2+).

Its subcellular location is the cytoplasm. It catalyses the reaction D-ribose 5-phosphate + ATP = 5-phospho-alpha-D-ribose 1-diphosphate + AMP + H(+). The protein operates within metabolic intermediate biosynthesis; 5-phospho-alpha-D-ribose 1-diphosphate biosynthesis; 5-phospho-alpha-D-ribose 1-diphosphate from D-ribose 5-phosphate (route I): step 1/1. Functionally, involved in the biosynthesis of the central metabolite phospho-alpha-D-ribosyl-1-pyrophosphate (PRPP) via the transfer of pyrophosphoryl group from ATP to 1-hydroxyl of ribose-5-phosphate (Rib-5-P). This Burkholderia pseudomallei (strain K96243) protein is Ribose-phosphate pyrophosphokinase.